We begin with the raw amino-acid sequence, 170 residues long: Acetyl-CoA decarbonylase/synthase complex subunit epsilon 2 (170 aa).

This sequence belongs to the CdhB family. As to quaternary structure, heterotetramer of two alpha and two epsilon subunits. The ACDS complex is made up of alpha, epsilon, beta, gamma and delta subunits with a probable stoichiometry of (alpha(2)epsilon(2))(4)-beta(8)-(gamma(1)delta(1))(8).

Its pathway is one-carbon metabolism; methanogenesis from acetate. Functionally, part of a complex that catalyzes the reversible cleavage of acetyl-CoA, allowing growth on acetate as sole source of carbon and energy. The alpha-epsilon subcomponent functions as a carbon monoxide dehydrogenase. The precise role of the epsilon subunit is unclear; it may have a stabilizing role within the alpha(2)epsilon(2) component and/or be involved in electron transfer to FAD during a potential FAD-mediated CO oxidation. This is Acetyl-CoA decarbonylase/synthase complex subunit epsilon 2 (cdhB2) from Methanosarcina acetivorans (strain ATCC 35395 / DSM 2834 / JCM 12185 / C2A).